The primary structure comprises 498 residues: MRLAVIRYIWLLVALLVALEPAYVHPDEHMQSVEVMMQKIFGLRGTVPWEFQPEYAARSFAPLWIFMGPALVAARLFNAGPRVVLGLLRIQGYFLYVSLTRVAVELVGRTKLRRSMAAFLLSTTYVVGAFQSHTFSNSIETLLAVAAVGLLEVVIADGRAGHRHVRISGVLGFLIALGLFNRVTFAGYLGLPCIVAFWQFYRRQWRSLAALLLCFLLTSGACIWIDTLSYGTSEWVITPLNNLLYNMDEENLAQHGLHPRYTHILVNLPMLLGPGLLFALGGIQRLSLPLLSCVSGVATLSLFKHQEARFLLPVVPLFLMSVDLTKLRTVSLTLTLKLWLAFNGLMVVIMGVGHQRGVITALHQLREEPIGVQVWWKTYSPPTWVLMNEALTVSTTNFVGDDERIDEVPLDVTRNHVIDLKGCNIELLNHTLSQFIAAGSKVHLIVPDSVAKKTALLTKRYGFDIHREFRTLVHLDLDHLDWSEPSSFTPGLSIYTVT.

The next 9 membrane-spanning stretches (helical) occupy residues 4–24, 60–80, 118–134, 135–155, 169–189, 208–228, 261–281, 286–303, and 332–352; these read AVIR…PAYV, FAPL…FNAG, AFLL…QSHT, FSNS…EVVI, GVLG…AGYL, LAAL…IDTL, YTHI…FALG, LSLP…LSLF, and LTLT…IMGV. N429 carries an N-linked (GlcNAc...) asparagine glycan.

It belongs to the glycosyltransferase 22 family. PIGZ subfamily.

It is found in the endoplasmic reticulum membrane. It participates in glycolipid biosynthesis; glycosylphosphatidylinositol-anchor biosynthesis. Functionally, alpha-1,2-mannosyltransferase involved in glycosylphosphatidylinositol-anchor biosynthesis. Transfers a fourth mannose to trimannosyl-GPIs during GPI precursor assembly. The presence of a fourth mannose in GPI is essential in fungi. The chain is GPI mannosyltransferase 4 (SMP3) from Eremothecium gossypii (strain ATCC 10895 / CBS 109.51 / FGSC 9923 / NRRL Y-1056) (Yeast).